The sequence spans 538 residues: Endoglucanase 16 (538 aa).

The N-terminal stretch at 1 to 26 (MRWRRVGDVVAVALLLGAAAAAAAAA) is a signal peptide. Catalysis depends on Asp-83, which acts as the Nucleophile. Residues His-431, Asp-483, and Glu-492 contribute to the active site. Residues 513 to 538 (RQESPSTTTTTTATTSSPEMGLSVNR) are disordered. Residues 516 to 530 (SPSTTTTTTATTSSP) are compositionally biased toward low complexity.

Belongs to the glycosyl hydrolase 9 (cellulase E) family.

Its subcellular location is the secreted. The catalysed reaction is Endohydrolysis of (1-&gt;4)-beta-D-glucosidic linkages in cellulose, lichenin and cereal beta-D-glucans.. This Oryza sativa subsp. japonica (Rice) protein is Endoglucanase 16.